A 321-amino-acid polypeptide reads, in one-letter code: Genome polyprotein (321 aa).

Topologically, residues 1-52 are cytoplasmic; sequence RNLGKVIDTLTCGFADLMGYIPLVGAPLGGAARALAHGVRVLEDGVNYATGN. Residues 6–57 are interaction with APOA2; it reads VIDTLTCGFADLMGYIPLVGAPLGGAARALAHGVRVLEDGVNYATGNLPGCS. Positions 48–51 are important for lipid droplets localization; the sequence is YATG. A helical transmembrane segment spans residues 53–73; sequence LPGCSFSIFLLALLSCLTVPA. The propeptide at 62 to 75 is ER anchor for the core protein, removed in mature form by host signal peptidase; sequence LLALLSCLTVPASA. The Lumenal segment spans residues 74 to 242; the sequence is SAHQVRNSTG…AGAHWGVLAG (169 aa). N-linked (GlcNAc...) asparagine; by host glycosylation is found at N80, N93, and N118. The important for fusion stretch occupies residues 149–180; sequence LVGSATLCSALYVGDLCGSVFLVGQLFTFSPR. N-linked (GlcNAc...) asparagine; by host glycosylation occurs at N189. The chain crosses the membrane as a helical span at residues 243-263; it reads IAYFSMVGNWAKVLVVLLLFA. Residues 264–321 lie on the Lumenal side of the membrane; it reads GVDAETYTSGGNAGHTMTGIVRFFAPGPKQNVHLINTNGSWHINSTALNCNDSLNTGW. The tract at residues 268–294 is HVR1; it reads ETYTSGGNAGHTMTGIVRFFAPGPKQN. N301, N307, and N314 each carry an N-linked (GlcNAc...) (high mannose) asparagine; by host glycan.

The protein belongs to the hepacivirus polyprotein family. As to quaternary structure, homooligomer. Interacts with E1 (via C-terminus). Interacts with the non-structural protein 5A. Interacts (via N-terminus) with host STAT1 (via SH2 domain); this interaction results in decreased STAT1 phosphorylation and ubiquitin-mediated proteasome-dependent STAT1 degradation, leading to decreased IFN-stimulated gene transcription. Interacts with host STAT3; this interaction constitutively activates STAT3. Interacts with host LTBR receptor. Interacts with host TNFRSF1A receptor and possibly induces apoptosis. Interacts with host HNRPK. Interacts with host YWHAE. Interacts with host UBE3A/E6AP. Interacts with host DDX3X. Interacts with host APOA2. Interacts with host RXRA protein. Interacts with host SP110 isoform 3/Sp110b; this interaction sequesters the transcriptional corepressor SP110 away from the nucleus. Interacts with host CREB3 nuclear transcription protein; this interaction triggers cell transformation. Interacts with host ACY3. Interacts with host C1QR1. Interacts with host RBM24; this interaction, which enhances the interaction of the mature core protein with 5'-UTR, may inhibit viral translation and favor replication. Interacts with host EIF2AK2/PKR; this interaction induces the autophosphorylation of EIF2AK2. Part of the viral assembly initiation complex composed of NS2, E1, E2, NS3, NS4A, NS5A and the mature core protein. Forms a heterodimer with envelope glycoprotein E2. Interacts with mature core protein. Interacts with protease NS2. The heterodimer E1/E2 interacts with host CLDN1; this interaction plays a role in viral entry into host cell. Interacts with host SPSB2 (via C-terminus). Part of the viral assembly initiation complex composed of NS2, E1, E2, NS3, NS4A, NS5A and the mature core protein. In terms of assembly, forms a heterodimer with envelope glycoprotein E1. Interacts with host CD81 and SCARB1 receptors; these interactions play a role in viral entry into host cell. Interacts with host EIF2AK2/PKR; this interaction inhibits EIF2AK2 and probably allows the virus to evade the innate immune response. Interacts with host CD209/DC-SIGN and CLEC4M/DC-SIGNR. Interact with host SPCS1; this interaction is essential for viral particle assembly. Interacts with protease NS2. The heterodimer E1/E2 interacts with host CLDN1; this interaction plays a role in viral entry into host cell. Part of the viral assembly initiation complex composed of NS2, E1, E2, NS3, NS4A, NS5A and the mature core protein. Post-translationally, specific enzymatic cleavages in vivo yield mature proteins. The structural proteins, core, E1, E2 and p7 are produced by proteolytic processing by host signal peptidases. The core protein precursor is synthesized as a 23 kDa, which is retained in the ER membrane through the hydrophobic signal peptide. Cleavage by the signal peptidase releases the 21 kDa mature core protein. The cleavage of the core protein precursor occurs between aminoacids 176 and 188 but the exact cleavage site is not known. Some degraded forms of the core protein appear as well during the course of infection. The other proteins (p7, NS2, NS3, NS4A, NS4B, NS5A and NS5B) are cleaved by the viral proteases. Autoprocessing between NS2 and NS3 is mediated by the NS2 cysteine protease catalytic domain and regulated by the NS3 N-terminal domain. Phosphorylated by host PKC and PKA. In terms of processing, ubiquitinated; mediated by UBE3A and leading to core protein subsequent proteasomal degradation. Post-translationally, highly N-glycosylated.

The protein resides in the host endoplasmic reticulum membrane. The protein localises to the host mitochondrion membrane. It localises to the virion. Its subcellular location is the host cytoplasm. It is found in the host nucleus. The protein resides in the host lipid droplet. The protein localises to the virion membrane. In terms of biological role, packages viral RNA to form a viral nucleocapsid, and promotes virion budding. Participates in the viral particle production as a result of its interaction with the non-structural protein 5A. Binds RNA and may function as a RNA chaperone to induce the RNA structural rearrangements taking place during virus replication. Modulates viral translation initiation by interacting with viral IRES and 40S ribosomal subunit. Affects various cell signaling pathways, host immunity and lipid metabolism. Prevents the establishment of cellular antiviral state by blocking the interferon-alpha/beta (IFN-alpha/beta) and IFN-gamma signaling pathways and by blocking the formation of phosphorylated STAT1 and promoting ubiquitin-mediated proteasome-dependent degradation of STAT1. Activates STAT3 leading to cellular transformation. Regulates the activity of cellular genes, including c-myc and c-fos. May repress the promoter of p53, and sequester CREB3 and SP110 isoform 3/Sp110b in the cytoplasm. Represses cell cycle negative regulating factor CDKN1A, thereby interrupting an important check point of normal cell cycle regulation. Targets transcription factors involved in the regulation of inflammatory responses and in the immune response: suppresses TNF-induced NF-kappa-B activation, and activates AP-1. Binds to dendritic cells (DCs) via C1QR1, resulting in down-regulation of T-lymphocytes proliferation. Alters lipid metabolism by interacting with hepatocellular proteins involved in lipid accumulation and storage. Induces up-regulation of FAS promoter activity, and thereby contributes to the increased triglyceride accumulation in hepatocytes (steatosis). Its function is as follows. Forms a heterodimer with envelope glycoprotein E2, which mediates virus attachment to the host cell, virion internalization through clathrin-dependent endocytosis and fusion with host membrane. Fusion with the host cell is most likely mediated by both E1 and E2, through conformational rearrangements of the heterodimer required for fusion rather than a classical class II fusion mechanism. E1/E2 heterodimer binds host apolipoproteins such as APOB and ApoE thereby forming a lipo-viro-particle (LVP). APOE associated to the LVP allows the initial virus attachment to cell surface receptors such as the heparan sulfate proteoglycans (HSPGs), syndecan-1 (SDC1), syndecan-1 (SDC2), the low-density lipoprotein receptor (LDLR) and scavenger receptor class B type I (SCARB1). The cholesterol transfer activity of SCARB1 allows E2 exposure and binding of E2 to SCARB1 and the tetraspanin CD81. E1/E2 heterodimer binding on CD81 activates the epithelial growth factor receptor (EGFR) signaling pathway. Diffusion of the complex E1-E2-EGFR-SCARB1-CD81 to the cell lateral membrane allows further interaction with Claudin 1 (CLDN1) and occludin (OCLN) to finally trigger HCV entry. Functionally, forms a heterodimer with envelope glycoprotein E1, which mediates virus attachment to the host cell, virion internalization through clathrin-dependent endocytosis and fusion with host membrane. Fusion with the host cell is most likely mediated by both E1 and E2, through conformational rearrangements of the heterodimer required for fusion rather than a classical class II fusion mechanism. The interaction between envelope glycoprotein E2 and host apolipoprotein E/APOE allows the proper assembly, maturation and infectivity of the viral particles. This interaction is probably promoted via the up-regulation of cellular autophagy by the virus. E1/E2 heterodimer binds host apolipoproteins such as APOB and APOE thereby forming a lipo-viro-particle (LVP). APOE associated to the LVP allows the initial virus attachment to cell surface receptors such as the heparan sulfate proteoglycans (HSPGs), syndecan-1 (SDC1), syndecan-1 (SDC2), the low-density lipoprotein receptor (LDLR) and scavenger receptor class B type I (SCARB1). The cholesterol transfer activity of SCARB1 allows E2 exposure and binding of E2 to SCARB1 and the tetraspanin CD81. E1/E2 heterodimer binding on CD81 activates the epithelial growth factor receptor (EGFR) signaling pathway. Diffusion of the complex E1-E2-EGFR-SCARB1-CD81 to the cell lateral membrane allows further interaction with Claudin 1 (CLDN1) and occludin (OCLN) to finally trigger HCV entry. Inhibits host EIF2AK2/PKR activation, preventing the establishment of an antiviral state. Viral ligand for CD209/DC-SIGN and CLEC4M/DC-SIGNR, which are respectively found on dendritic cells (DCs), and on liver sinusoidal endothelial cells and macrophage-like cells of lymph node sinuses. These interactions allow the capture of circulating HCV particles by these cells and subsequent facilitated transmission to permissive cells such as hepatocytes and lymphocyte subpopulations. The polypeptide is Genome polyprotein (Hepatitis C virus (isolate HCT18) (HCV)).